The chain runs to 368 residues: Aminomethyltransferase (368 aa).

It belongs to the GcvT family. The glycine cleavage system is composed of four proteins: P, T, L and H.

It carries out the reaction N(6)-[(R)-S(8)-aminomethyldihydrolipoyl]-L-lysyl-[protein] + (6S)-5,6,7,8-tetrahydrofolate = N(6)-[(R)-dihydrolipoyl]-L-lysyl-[protein] + (6R)-5,10-methylene-5,6,7,8-tetrahydrofolate + NH4(+). The glycine cleavage system catalyzes the degradation of glycine. The protein is Aminomethyltransferase of Thermoanaerobacter sp. (strain X514).